The primary structure comprises 164 residues: MRVLGIDPGSRITGYGIIEKVGNRLVHVDNGAIHTDNHKEFALRLHRIFEGLCEVIAEYRPDAMAVEQVFLAHNAQSALKLGQARGAAIVAGVNAGLPVSEYTAMQVKQAVVGYGHARKEQVQQMVKSLLNLPEIAQADASDALAVAVCHANSAGMKNILRSIR.

Residues aspartate 7, glutamate 67, and aspartate 139 contribute to the active site. Positions 7, 67, and 139 each coordinate Mg(2+).

It belongs to the RuvC family. In terms of assembly, homodimer which binds Holliday junction (HJ) DNA. The HJ becomes 2-fold symmetrical on binding to RuvC with unstacked arms; it has a different conformation from HJ DNA in complex with RuvA. In the full resolvosome a probable DNA-RuvA(4)-RuvB(12)-RuvC(2) complex forms which resolves the HJ. It depends on Mg(2+) as a cofactor.

It localises to the cytoplasm. It carries out the reaction Endonucleolytic cleavage at a junction such as a reciprocal single-stranded crossover between two homologous DNA duplexes (Holliday junction).. Its function is as follows. The RuvA-RuvB-RuvC complex processes Holliday junction (HJ) DNA during genetic recombination and DNA repair. Endonuclease that resolves HJ intermediates. Cleaves cruciform DNA by making single-stranded nicks across the HJ at symmetrical positions within the homologous arms, yielding a 5'-phosphate and a 3'-hydroxyl group; requires a central core of homology in the junction. The consensus cleavage sequence is 5'-(A/T)TT(C/G)-3'. Cleavage occurs on the 3'-side of the TT dinucleotide at the point of strand exchange. HJ branch migration catalyzed by RuvA-RuvB allows RuvC to scan DNA until it finds its consensus sequence, where it cleaves and resolves the cruciform DNA. In Geobacter metallireducens (strain ATCC 53774 / DSM 7210 / GS-15), this protein is Crossover junction endodeoxyribonuclease RuvC.